The following is a 399-amino-acid chain: Elongation factor Tu (399 aa).

One can recognise a tr-type G domain in the interval 10 to 204 (KDHVNIGTIG…AVDDYIDTPE (195 aa)). The segment at 19–26 (GHVDHGKT) is G1. 19 to 26 (GHVDHGKT) lines the GTP pocket. Thr-26 is a binding site for Mg(2+). The G2 stretch occupies residues 60 to 64 (GITIN). Residues 81 to 84 (DCPG) are G3. GTP-binding positions include 81-85 (DCPGH) and 136-139 (NKKD). A G4 region spans residues 136-139 (NKKD). Positions 174-176 (SAL) are G5.

The protein belongs to the TRAFAC class translation factor GTPase superfamily. Classic translation factor GTPase family. EF-Tu/EF-1A subfamily. As to quaternary structure, monomer.

Its subcellular location is the cytoplasm. The catalysed reaction is GTP + H2O = GDP + phosphate + H(+). Functionally, GTP hydrolase that promotes the GTP-dependent binding of aminoacyl-tRNA to the A-site of ribosomes during protein biosynthesis. This Synechocystis sp. (strain ATCC 27184 / PCC 6803 / Kazusa) protein is Elongation factor Tu.